Reading from the N-terminus, the 428-residue chain is RUN domain-containing protein 3A (428 aa).

Positions Asp-52–Glu-182 constitute an RUN domain. A coiled-coil region spans residues Glu-237–Ile-314. The interval His-349 to Gly-375 is disordered.

It belongs to the RUNDC3 family.

This is RUN domain-containing protein 3A (rundc3a) from Danio rerio (Zebrafish).